Consider the following 451-residue polypeptide: MASRVNTSFTLIPKQKCRRSNHHSSYFCNTLDSDPQLLSTLGNFKVLPLEILHIILRYLSVKDIGMLSMVSKTVSQHIINYISTSSGSRRLLLQNFHDLDLPGTKEETALLEHYRALGLLFKRCTLLLPTKERLKYIHKILSEVSCFKFSGCSVPLQCLGLSCYGMFLQTLTAGWDELECHRVYNFLCELTNLSRKMQTVVCNKPGSARKLELRVRLFCRNVLLDHWTHRSDSAFWLTRILKPWPMVNQARLLYIIFGPTSPHDGQVIWQEMIEGPTDESSLKGLANAIKLLYDTGAKGWTADDVISLVDELSVVPREWLLENNARLLILSGNNICFTFMASKAVNGRAVELARLVVFLALVCEKELYCMDWTVRMMQKVCKVFSTAAERKSFLQSIANAFACVTMEMLQPVMSGDRDDDDRGFLNLFHLLHAQANFHKEVLYLTMNAISS.

The region spanning 41-91 (LGNFKVLPLEILHIILRYLSVKDIGMLSMVSKTVSQHIINYISTSSGSRRL) is the F-box domain.

In terms of assembly, part of a SCF (SKP1-cullin-F-box) protein ligase complex.

In terms of biological role, probably recognizes and binds to some phosphorylated proteins and promotes their ubiquitination and degradation. This chain is F-box only protein 47 (Fbxo47), found in Mus musculus (Mouse).